Reading from the N-terminus, the 880-residue chain is MKQLTGAQIRQMFLDFFQEKGHAVEPSASLVPHEDPSLLWINSGVATLKKYFDGRVIPQNPRITNAQKSIRTNDIENVGKTARHHTFFEMLGNFSIGDYFKEEAITWAWEFLTSDKWIGFDKELLSVTIHPEDEEAFTIWNEKMGVPKERIIRLEENFWDIGEGPSGPNTEIFYDRGEAYGNDFSDPELYPGGENERYLEVWNLVFSQFNHNPDGSYTPLPKKNIDTGMGLERMTSIVQDVPTNFDTDLFMPMIGATETISGEKYRNGDLEKDMAFKVIADHIRTVTFAVGDGALPSNEGRGYVLRRLLRRAVRYSKKLNINRPFMFELVPVVGEVMKDFYPEVLEKKDFIAKVVKNEEERFHETLHDGEAILAEVIAKAKEEKTTVISGVDAFRLYDTYGFPIELTEEYAEEAGMTVDQEGFENEMEKQRERARAARQDVDSMQVQGGVLGEVKVASEFVGYGTVATESNVVALVKNGEYTDSLQAGEEGQLMLNVTPFYAESGGQIADRGYLLADGVKVLVKDVQKAPNGQNLHKVVVEEGTLTKDAAVKAIIDTKNRGSVVKNHTATHLLHQALKDVLGTHVNQAGSLVTSERLRFDFSHFGQVQADELEKIERIVNEKIWESIDVEISQKAIEEAKEMGAMALFGEKYGDVVRVVQVGDYSLELCGGCHVDNTASIGIFKIVAESGIGAGTRRIEAVTGKSAYELMNDQVGLLKEAAGKMKTNPKDILTRVDGLFAEVKQLQKENESLAAKLSNIEAGNLTDSVMTVDGVNVLAAKVNVADMNNLRTMMDDLKNKLESAVVVLASVNDDKVNILAGVTKDLISQGYHAGKLVKEVASRCGGGGGGRPDMAQAGGKNPAQVEEALAFVQEYVKSVSK.

The Zn(2+) site is built by histidine 567, histidine 571, cysteine 669, and histidine 673.

The protein belongs to the class-II aminoacyl-tRNA synthetase family. It depends on Zn(2+) as a cofactor.

It localises to the cytoplasm. The enzyme catalyses tRNA(Ala) + L-alanine + ATP = L-alanyl-tRNA(Ala) + AMP + diphosphate. In terms of biological role, catalyzes the attachment of alanine to tRNA(Ala) in a two-step reaction: alanine is first activated by ATP to form Ala-AMP and then transferred to the acceptor end of tRNA(Ala). Also edits incorrectly charged Ser-tRNA(Ala) and Gly-tRNA(Ala) via its editing domain. The protein is Alanine--tRNA ligase of Bacillus thuringiensis subsp. konkukian (strain 97-27).